A 934-amino-acid polypeptide reads, in one-letter code: Bifunctional uridylyltransferase/uridylyl-removing enzyme (934 aa).

The tract at residues 1–379 (MSAHDLKLEE…TFSRRKRKLS (379 aa)) is uridylyltransferase. The uridylyl-removing stretch occupies residues 380 to 736 (DDGAFISENH…AKPHAFEAVT (357 aa)). The region spanning 496–613 (VDEHLLRCIA…IDFADTVQTM (118 aa)) is the HD domain. ACT domains are found at residues 737-818 (EITV…DMLA) and 848-931 (VIEV…RSPQ).

The protein belongs to the GlnD family. Mg(2+) serves as cofactor.

The catalysed reaction is [protein-PII]-L-tyrosine + UTP = [protein-PII]-uridylyl-L-tyrosine + diphosphate. It catalyses the reaction [protein-PII]-uridylyl-L-tyrosine + H2O = [protein-PII]-L-tyrosine + UMP + H(+). With respect to regulation, uridylyltransferase (UTase) activity is inhibited by glutamine, while glutamine activates uridylyl-removing (UR) activity. Its function is as follows. Modifies, by uridylylation and deuridylylation, the PII regulatory proteins (GlnB and homologs), in response to the nitrogen status of the cell that GlnD senses through the glutamine level. Under low glutamine levels, catalyzes the conversion of the PII proteins and UTP to PII-UMP and PPi, while under higher glutamine levels, GlnD hydrolyzes PII-UMP to PII and UMP (deuridylylation). Thus, controls uridylylation state and activity of the PII proteins, and plays an important role in the regulation of nitrogen assimilation and metabolism. The polypeptide is Bifunctional uridylyltransferase/uridylyl-removing enzyme (Brucella suis (strain ATCC 23445 / NCTC 10510)).